The sequence spans 122 residues: Large ribosomal subunit protein bL17 (122 aa).

The protein belongs to the bacterial ribosomal protein bL17 family. As to quaternary structure, part of the 50S ribosomal subunit. Contacts protein L32.

The chain is Large ribosomal subunit protein bL17 from Staphylococcus epidermidis (strain ATCC 35984 / DSM 28319 / BCRC 17069 / CCUG 31568 / BM 3577 / RP62A).